Reading from the N-terminus, the 150-residue chain is MNESIDINQIFTLLPHRYPFILVDRVIDYKVMEYLIAIKNVTINENFFTGHFPGNPIMPGVLMLEALAQACGILANLSRQPKEGYEFLHYFAGIDNARFKQVVIPGDQLRLEVRLAGQKRDFWRMHGEAYIGDKLACSADLLSAAKEIKK.

The active site involves H51.

The protein belongs to the thioester dehydratase family. FabZ subfamily.

The protein localises to the cytoplasm. It carries out the reaction a (3R)-hydroxyacyl-[ACP] = a (2E)-enoyl-[ACP] + H2O. Functionally, involved in unsaturated fatty acids biosynthesis. Catalyzes the dehydration of short chain beta-hydroxyacyl-ACPs and long chain saturated and unsaturated beta-hydroxyacyl-ACPs. This chain is 3-hydroxyacyl-[acyl-carrier-protein] dehydratase FabZ, found in Legionella pneumophila (strain Paris).